We begin with the raw amino-acid sequence, 761 residues long: Complement factor B (761 aa).

A signal peptide spans 1 to 22; it reads MESPQLCLVLLVLGFSSGGVSA. Sushi domains follow at residues 32-97, 98-157, and 160-217; these read VSCS…ECRA, IRCP…ICDD, and GYCP…SCQD. Disulfide bonds link Cys34–Cys73, Cys59–Cys95, Cys100–Cys142, Cys128–Cys155, Cys162–Cys202, and Cys188–Cys215. 2 N-linked (GlcNAc...) asparagine glycosylation sites follow: Asn119 and Asn139. The region spanning 267–466 is the VWFA domain; sequence NIYLVLDGSD…DLENVFYQMI (200 aa). The Mg(2+) site is built by Ser275 and Ser277. Asn282 carries N-linked (GlcNAc...) asparagine glycosylation. Position 350 (Thr350) interacts with Mg(2+). A glycan (N-linked (GlcNAc...) asparagine) is linked at Asn375. In terms of domain architecture, Peptidase S1 spans 474–754; the sequence is LCGMVWEHKK…VLPWLKDKLK (281 aa). 5 disulfide bridges follow: Cys475–Cys593, Cys508–Cys524, Cys596–Cys612, Cys653–Cys679, and Cys692–Cys722. Residues His523 and Asp573 each act as charge relay system in the active site. The active-site Charge relay system is the Ser696.

It belongs to the peptidase S1 family. As to quaternary structure, monomer. Interacts with complement C3b; this interaction is dependent on the presence of Mg(2+). In terms of assembly, catalytic component of the C3 convertase of the alternative complement pathway, also named C3bBb, composed of complement factor B Bb and complement C3b. Catalytic component of the C5 convertase of the alternative complement pathway, also named C3bBb3b, composed of complement factor B Bb and additional molecules of complement C3b. Interacts to CFP; this interaction contributes to the stabilization of the active C3-convertase enzyme complex. Mg(2+) serves as cofactor. Mn(2+) is required as a cofactor. Post-translationally, cleaved by CFD following activation of the alternative complement system, generating Ba and Bb chains. Cleavage and activation takes place when CFB is already associated with complement C3b.

It localises to the secreted. Its subcellular location is the cell surface. It carries out the reaction Cleavage of Arg-|-Ser bond in complement component C3 alpha-chain to yield C3a and C3b, and Arg-|-Xaa bond in complement component C5 alpha-chain to yield C5a and C5b.. In terms of biological role, precursor of the catalytic component of the C3 and C5 convertase complexes of the alternative pathway of the complement system, a cascade of proteins that leads to phagocytosis and breakdown of pathogens and signaling that strengthens the adaptive immune system. The alternative complement pathway acts as an amplification loop that enhances other complement pathways (classical, lectin and GZMK) by promoting formation of additional C3 and C5 convertases. CFB is cleaved and activated by CFD to generate Ba and Bb chains; Bb chain constituting the catalytic component of the C3 and C5 convertases. Functionally, serine protease component of the complement C3 and C5 convertase complexes of the alternative complement pathway. Following cleavage and activation by factor D (CFD), forms the C3 convertase together with complement C3b. As part of the C3 convertase, cleaves and activates C3 into C3a anaphylatoxin and C3b opsonin, the next components of the complement pathways. When an additional complement C3b molecule binds to the C3 convertase, forms the C5 convertase, which cleaves and activates C5 into C5a anaphylatoxin and C5b component of the membrane attack complex. Involved in proliferation and differentiation of preactivated B-lymphocytes, rapid spreading of peripheral blood monocytes, stimulation of lymphocyte blastogenesis and lysis of erythrocytes. The chain is Complement factor B (Cfb) from Mus musculus (Mouse).